Here is a 378-residue protein sequence, read N- to C-terminus: MELQEVLHMNEGEGDTSYAKNASYNLALAKVKPFLEQCIRELLRANLPNINKCIKVADLGCASGPNTLLTVRDIVQSIDKVGQEEKNELERPTIQIFLNDLFQNDFNSVFKLLPSFYRKLEKENGRKIGSCLISAMPGSFYGRLFPEESMHFLHSCYSVHWLSQVPSGLVIELGIGANKGSIYSSKGCRPPVQKAYLDQFTKDFTTFLRIHSKELFSRGRMLLTCICKVDEFDEPNPLDLLDMAINDLIVEGLLEEEKLDSFNIPFFTPSAEEVKCIVEEEGSCEILYLETFKAHYDAAFSIDDDYPVRSHEQIKAEYVASLIRSVYEPILASHFGEAIMPDLFHRLAKHAAKVLHMGKGCYNNLIISLAKKPEKSDV.

8 residues coordinate S-adenosyl-L-homocysteine: tyrosine 18, cysteine 61, asparagine 66, aspartate 100, leucine 101, serine 139, phenylalanine 140, and cysteine 156. 3 residues coordinate theobromine: tyrosine 157, histidine 160, and tryptophan 161. Residues asparagine 178, aspartate 260, phenylalanine 262, and asparagine 263 each contribute to the Mg(2+) site. Tyrosine 362 contributes to the theobromine binding site.

This sequence belongs to the methyltransferase superfamily. Type-7 methyltransferase family. Requires Mg(2+) as cofactor. In terms of tissue distribution, expressed, at low levels, in stems, young leaves, floral buds and immature fruits (grains), but not in roots, old leaves and mature fruits.

Its subcellular location is the cytoplasm. It catalyses the reaction 7-methylxanthine + S-adenosyl-L-methionine = theobromine + S-adenosyl-L-homocysteine + H(+). It functions in the pathway alkaloid biosynthesis. Its function is as follows. Involved in the biosynthesis of caffeine. Catalyzes the conversion of 7-methylxanthine (7mX) to theobromine and of paraxanthine to caffeine. Has a 5-fold preference for 7mX. This chain is Monomethylxanthine methyltransferase 1, found in Coffea arabica (Arabian coffee).